Reading from the N-terminus, the 241-residue chain is uncharacterized protein (241 aa).

The 133-residue stretch at 84-216 (TVVSLVVCDL…APGPVVAGRD (133 aa)) folds into the GGDEF domain. The interval 215 to 241 (RDGEVVRLADSPPKSAHDRRRLRGNRP) is disordered. Residues 231 to 241 (HDRRRLRGNRP) are compositionally biased toward basic residues.

This is an uncharacterized protein from Streptomyces griseus.